Consider the following 242-residue polypeptide: MKLLVVKDYEEMSEVAAKIFKEVISEKTNAVLGLATGSTPEGLYKKIIEMNRNKEIDFSNIKTVNLDEYVGLGGEDPQSYRYFMNEKLFNHVNINKANTFVPNGLAKDLDEEAKNYDKKVDELGGIDIQILGIGANGHIAFNEPDDFLIAETHVTGLTKTTIEANSRFFKSIEEVPTKALSMGLGQIMKARKIVLLVRGQDKAEAIKGLFKGNITTHNPATMLHMHKDVTVIIDEEMANAIK.

Aspartate 67 (proton acceptor; for enolization step) is an active-site residue. Asparagine 136 functions as the For ring-opening step in the catalytic mechanism. Histidine 138 acts as the Proton acceptor; for ring-opening step in catalysis. Catalysis depends on glutamate 143, which acts as the For ring-opening step.

This sequence belongs to the glucosamine/galactosamine-6-phosphate isomerase family. NagB subfamily.

The enzyme catalyses alpha-D-glucosamine 6-phosphate + H2O = beta-D-fructose 6-phosphate + NH4(+). It participates in amino-sugar metabolism; N-acetylneuraminate degradation; D-fructose 6-phosphate from N-acetylneuraminate: step 5/5. Functionally, catalyzes the reversible isomerization-deamination of glucosamine 6-phosphate (GlcN6P) to form fructose 6-phosphate (Fru6P) and ammonium ion. The protein is Glucosamine-6-phosphate deaminase of Clostridium beijerinckii (strain ATCC 51743 / NCIMB 8052) (Clostridium acetobutylicum).